The chain runs to 293 residues: MAIVSAEKFVQAARENGYAVGGFNTNNLEWTQAILRAAEAKQAPVLIQTSMGAAKYMGGYKVCQSLITNLVESMGITVPVAIHLDHGHYEDALECIEVGYTSIMFDGSHLPVEENLAKTAEVVKIAHAKGVSVEAEVGTIGGEEDGIIGKGELAPIEDAKAMVETGIDFLAAGIGNIHGPYPENWEGLALDHLEKLTAAVPGFPIVLHGGSGIPDDQIKEAIRLGVAKVNVNTESQIAFSNATREFARNYEANEAEYDGKKLFDPRKFLAPGMKAVQGAVEERIDVFGSANKA.

Ser50 is a D-glyceraldehyde 3-phosphate binding site. Residue Asp85 is the Proton donor of the active site. Zn(2+) is bound by residues His86, Asp106, Glu136, and His178. A dihydroxyacetone phosphate-binding site is contributed by Gly179. His208 is a binding site for Zn(2+). Dihydroxyacetone phosphate-binding positions include 209–211 (GGS) and 230–233 (NVNT).

Belongs to the class II fructose-bisphosphate aldolase family. Requires Zn(2+) as cofactor.

The enzyme catalyses beta-D-fructose 1,6-bisphosphate = D-glyceraldehyde 3-phosphate + dihydroxyacetone phosphate. It participates in carbohydrate degradation; glycolysis; D-glyceraldehyde 3-phosphate and glycerone phosphate from D-glucose: step 4/4. Functionally, catalyzes the aldol condensation of dihydroxyacetone phosphate (DHAP or glycerone-phosphate) with glyceraldehyde 3-phosphate (G3P) to form fructose 1,6-bisphosphate (FBP) in gluconeogenesis and the reverse reaction in glycolysis. This chain is Fructose-bisphosphate aldolase (fba), found in Streptococcus pyogenes serotype M1.